A 376-amino-acid polypeptide reads, in one-letter code: 23S rRNA (uracil(747)-C(5))-methyltransferase RlmC (376 aa).

Positions 3, 11, 14, and 87 each coordinate [4Fe-4S] cluster. S-adenosyl-L-methionine contacts are provided by Q212, F241, E262, and N307. The Nucleophile role is filled by C334.

It belongs to the class I-like SAM-binding methyltransferase superfamily. RNA M5U methyltransferase family. RlmC subfamily.

The enzyme catalyses uridine(747) in 23S rRNA + S-adenosyl-L-methionine = 5-methyluridine(747) in 23S rRNA + S-adenosyl-L-homocysteine + H(+). In terms of biological role, catalyzes the formation of 5-methyl-uridine at position 747 (m5U747) in 23S rRNA. In Yersinia pseudotuberculosis serotype I (strain IP32953), this protein is 23S rRNA (uracil(747)-C(5))-methyltransferase RlmC.